We begin with the raw amino-acid sequence, 66 residues long: MKAYWDSLTKEQQGELAGKVGSTPGYLRLVFNGYKKASFVLAKKLEQYTSGAITKSDLRPDIYPKD.

In Escherichia coli (strain K12), this protein is Prophage transcriptional regulatory protein (croE).